Here is a 282-residue protein sequence, read N- to C-terminus: Cuticle collagen 8 (282 aa).

Positions 1-24 (MLVCVFVALYTMMGLLTDIKQLQS) are cleaved as a signal peptide. Residues 86–282 (GPKSEGCPAG…CPCPGRSYKA (197 aa)) are disordered. Triple-helical region regions lie at residues 95–124 (GPPGPPGEGGQSGEPGHDGDDGKPGAPGVI) and 141–269 (GRPG…PGPD). The span at 170-180 (TGGQGGPGEQG) shows a compositional bias: gly residues. Pro residues predominate over residues 214–224 (PPGPRGPPGPE). Gly residues predominate over residues 225 to 234 (GNPGGAGEDG). Over residues 235–244 (NQGPVGHPGV) the composition is skewed to low complexity.

Belongs to the cuticular collagen family. Collagen polypeptide chains are complexed within the cuticle by disulfide bonds and other types of covalent cross-links.

Functionally, nematode cuticles are composed largely of collagen-like proteins. The cuticle functions both as an exoskeleton and as a barrier to protect the worm from its environment. The protein is Cuticle collagen 8 (col-8) of Caenorhabditis elegans.